The sequence spans 226 residues: Killer cell lectin-like receptor subfamily E member 1 (226 aa).

The interval Met1–Thr28 is disordered. At Met1–Arg68 the chain is on the cytoplasmic side. Positions Thr7–Lys18 are enriched in polar residues. A helical; Signal-anchor for type II membrane protein membrane pass occupies residues Leu69 to Thr89. Residues Thr90–Lys226 are Extracellular-facing. Intrachain disulfides connect Cys113/Cys124, Cys141/Cys224, and Cys202/Cys216. Residues Phe120–Lys225 form the C-type lectin domain. N-linked (GlcNAc...) asparagine glycosylation occurs at Asn145.

As to quaternary structure, heterodimer; with KLRI1 or KLRI2. As to expression, expressed in natural killer (NK) cells (at protein level). Also detected in natural killer T (NKT) cells (at protein level). Has little or no expression in T cells (at protein level).

It localises to the cell membrane. In terms of biological role, lectin-like receptor for natural killer (NK) cells. Can either inhibit or activate NK cell cytotoxic activity, depending on its binding partner. Heterodimer formation with KLRI1 mediates NK cell inhibition whereas heterodimer formation with KLRI2 mediates NK cell activation. Plays a role in allogeneic recognition by the immune system. The chain is Killer cell lectin-like receptor subfamily E member 1 from Mus musculus (Mouse).